A 340-amino-acid chain; its full sequence is E3 ubiquitin ligase BIG BROTHER-related (340 aa).

2 disordered regions span residues 1 to 56 and 133 to 182; these read MPME…GVGE and YDED…GNSD. Polar residues predominate over residues 34–46; the sequence is NRQTGVVSDTGSG. 2 stretches are compositionally biased toward acidic residues: residues 133 to 164 and 173 to 182; these read YDED…EDGL and DDQEDDGNSD. The RING-type; atypical zinc finger occupies 288–329; sequence CVICRLDYEDDEDLILLPCKHSYHSECINNWLKINKVCPVCS.

In terms of processing, auto-ubiquitinated.

The enzyme catalyses S-ubiquitinyl-[E2 ubiquitin-conjugating enzyme]-L-cysteine + [acceptor protein]-L-lysine = [E2 ubiquitin-conjugating enzyme]-L-cysteine + N(6)-ubiquitinyl-[acceptor protein]-L-lysine.. Its pathway is protein modification; protein ubiquitination. Its function is as follows. E3 ubiquitin-ligase probably involved in organ size regulation. The chain is E3 ubiquitin ligase BIG BROTHER-related (BBR) from Arabidopsis thaliana (Mouse-ear cress).